Here is a 283-residue protein sequence, read N- to C-terminus: Phosphate import ATP-binding protein PstB (283 aa).

Residues 1–20 (MAQTLAQTKQISQSHTFDVS) show a composition bias toward polar residues. Residues 1 to 32 (MAQTLAQTKQISQSHTFDVSQSHHKTPDDTNS) are disordered. An ABC transporter domain is found at 37-278 (YSTQNLDLWY…PSNKKTEDYI (242 aa)). 69 to 76 (GPSGCGKS) provides a ligand contact to ATP.

The protein belongs to the ABC transporter superfamily. Phosphate importer (TC 3.A.1.7) family. In terms of assembly, the complex is composed of two ATP-binding proteins (PstB), two transmembrane proteins (PstC and PstA) and a solute-binding protein (PstS).

It localises to the cell membrane. The catalysed reaction is phosphate(out) + ATP + H2O = ADP + 2 phosphate(in) + H(+). Part of the ABC transporter complex PstSACB involved in phosphate import. Responsible for energy coupling to the transport system. This chain is Phosphate import ATP-binding protein PstB, found in Staphylococcus aureus (strain MRSA252).